Reading from the N-terminus, the 487-residue chain is UL37 immediate early glycoprotein (487 aa).

A signal peptide spans Met-1–Tyr-22. The span at Gly-83–Asn-107 shows a compositional bias: acidic residues. The interval Gly-83–Gly-121 is disordered. Residues Asn-206, Asn-210, Asn-219, Asn-223, Asn-242, Asn-246, Asn-275, Asn-281, Asn-294, Asn-297, Asn-306, Asn-333, Asn-337, Asn-343, Asn-379, Asn-384, and Asn-391 are each glycosylated (N-linked (GlcNAc...) asparagine; by host). A helical transmembrane segment spans residues Trp-433–Leu-459.

This sequence belongs to the immediate early glycoprotein family. Interacts with host BAX. Interacts with host RSAD2/viperin; this interaction results in RSAD2/viperin relocalization from the endoplasmic reticulum to the mitochondria, actin cytoskeleton disruption and enhancement of infection. Interacts with host PEX19; this interaction inhibits the peroxisomal-dependent antiviral signaling. Interacts with host CHCHD6; this interaction rewires mitochondria by engaging the conserved MICOS complex.

It localises to the host endoplasmic reticulum membrane. The protein localises to the host Golgi apparatus membrane. It is found in the host mitochondrion membrane. Its subcellular location is the host peroxisome. In terms of biological role, multifunctional transmembrane protein that plays several key roles in viral replication. Rapidely traffics from the host endoplasmic reticulum to the outer mitochondrial membrane where it acts to inhibit host immune response, block apoptotic signaling, regulate calcium flux, and induce mitochondrial fragmentation. Sequesters proapoptotic BAX at the outer mitochondrial membrane and prevents cytochrome c release and subsequent initiation of the proapoptotic cascade. Also provoques a calcium efflux from host endoplasmic reticulum and F-actin cytoskeleton disruption. Participates in the increase of host mitochondrial biogenesis, thus promoting viral replication by efficient use of newly made mitochondria. Additionally, a subset of vMIA localizes to peroxisomes, causing fragmentation and blocking peroxisomal MAVS signaling. Mechanistically, inhibits host MAVS oligomerization at peroxisomes in a mitochondrial fission factors (MFF)-dependent manner and in mitochondria independently of mitochondrial fission factors. Plays an essential role in the trafficking of host viperin/RSAD2 from the endoplasmic reticulum to the viral assembly compartment via the mitochondria during viral infection as failure of viperin to localize to the mitochondria results in insufficient lipogenesis and thus reduces viral replication. Its function is as follows. May play a role in escape from the host antiviral response. The sequence is that of UL37 immediate early glycoprotein (UL37) from Human cytomegalovirus (strain AD169) (HHV-5).